A 228-amino-acid polypeptide reads, in one-letter code: MAKIKEKFDNVFELDLGDGIKRIGTKSLVPNKRVYGEKLVNVKNTEYRVWNPNKSKLGASIINGLKEMPIKKGSKVLYLGASAGTTPSHVADVAEDSPVYAVEFAPRIMREFIESCEGRKNLFPILGDANKPEEYANIVEKVDVIFEDVAQPNQAEILIKNAKWFLKKGGYGMISIKARSVDVTENPRVIFEAQKEIMEQNGFKIVDAINIEPFEKDHMLFVGIWNGQ.

Residues 85 to 86 (TT), 103 to 104 (EF), 128 to 129 (DA), and 148 to 151 (DVAQ) each bind S-adenosyl-L-methionine.

It belongs to the methyltransferase superfamily. Fibrillarin family. As to quaternary structure, interacts with nop5. Component of box C/D small ribonucleoprotein (sRNP) particles that contain rpl7ae, FlpA and nop5, plus a guide RNA.

In terms of biological role, involved in pre-rRNA and tRNA processing. Utilizes the methyl donor S-adenosyl-L-methionine to catalyze the site-specific 2'-hydroxyl methylation of ribose moieties in rRNA and tRNA. Site specificity is provided by a guide RNA that base pairs with the substrate. Methylation occurs at a characteristic distance from the sequence involved in base pairing with the guide RNA. This is Fibrillarin-like rRNA/tRNA 2'-O-methyltransferase from Methanococcus voltae.